We begin with the raw amino-acid sequence, 551 residues long: MSSGTENDQFYSFDESDSSSIELYESHNTSEFTIHGLVFPKLISVTSQDSEFDINEDEDGVDTIYEGMLDAPLTKNNKRILCEGSVPNLSYECLTTKGIFERMLQRVDHLQPIFAIPSADILILLQHYDWNEERLLEVWTEKMDELLVELGLSTTANIKKDNDYNSHFREVEFKNDFTCIICCDKKDTETFALECGHEYCINCYRHYIKDKLHEGNIITCMDCSLALKNEDIDKVMGHPSSSKLMDSSIKSFVQKHNRNYKWCPFADCKSIVHLRDTSSLPEYTRLHYSPFVKCNSFHRFCFNCGFEVHSPADCKITTAWVKKARKESEILNWVLSHTKECPKCSVNIEKNGGCNHMVCSSCKYEFCWICEGPWAPHGKNFFQCTMYKNNEDNKSKNPQDANKTLKKYTFYYRLFNEHEVSAKLDWNLGQTLGTKVHALQERIGISWIDGQFLSESLKVLNEGRTVLKWSFAVAYYSDASHNLTKIFVDNQMLLANAVESLSELLQIKTPEVIMKRRPEFYNKAGYVENRTTALMECGRELLCKGICKAAE.

Residues 175–388 are TRIAD supradomain; that stretch reads NDFTCIICCD…KNFFQCTMYK (214 aa). Positions 179, 182, 200, 203, 301, 304, 309, 314, 341, and 344 each coordinate Zn(2+). Residues 179–225 form an RING-type 1 zinc finger; it reads CIICCDKKDTETFALECGHEYCINCYRHYIKDKLHEGNIITCMDCSL. The IBR-type zinc-finger motif lies at 242 to 314; it reads SKLMDSSIKS…GFEVHSPADC (73 aa). The segment at 341-370 adopts an RING-type 2; atypical zinc-finger fold; sequence CPKCSVNIEKNGGCNHMVCSSCKYEFCWIC. Cys354 is a catalytic residue. Residues Cys359, Cys362, Cys367, Cys370, His377, and Cys384 each coordinate Zn(2+).

Belongs to the RBR family. As to quaternary structure, interacts with the E2 ubiquitin-conjugating enzyme UBC4 and histones H3 and H4.

It carries out the reaction [E2 ubiquitin-conjugating enzyme]-S-ubiquitinyl-L-cysteine + [acceptor protein]-L-lysine = [E2 ubiquitin-conjugating enzyme]-L-cysteine + [acceptor protein]-N(6)-ubiquitinyl-L-lysine.. It functions in the pathway protein modification; protein ubiquitination. Functionally, probable ubiquitin-protein ligase involved in the degradation-related ubiquitination of histones. Contributes to the post-translational regulation of histone protein levels by polyubiquitination of excess histones for subsequent degradation. This chain is E3 ubiquitin-protein ligase HEL1, found in Saccharomyces cerevisiae (strain ATCC 204508 / S288c) (Baker's yeast).